The sequence spans 175 residues: Urease accessory protein UreE (175 aa).

The tract at residues 134-175 is disordered; sequence FQPESGAYGGGHHHGDESATDLHNPGHGPHRSVPKIHEFKPR.

This sequence belongs to the UreE family.

Its subcellular location is the cytoplasm. Functionally, involved in urease metallocenter assembly. Binds nickel. Probably functions as a nickel donor during metallocenter assembly. In Dechloromonas aromatica (strain RCB), this protein is Urease accessory protein UreE.